The primary structure comprises 164 residues: V-type proton ATPase subunit c3 (164 aa).

The Lumenal segment spans residues 1–11; the sequence is MSTFSGDETAP. The chain crosses the membrane as a helical span at residues 12–32; the sequence is FFGFLGAAAALVFSCMGAAYG. The Cytoplasmic portion of the chain corresponds to 33 to 54; it reads TAKSGVGVASMGVMRPELVMKS. The chain crosses the membrane as a helical span at residues 55–75; the sequence is IVPVVMAGVLGIYGLIIAVII. Residues 76-94 lie on the Lumenal side of the membrane; the sequence is STGINPKAKSYYLFDGYAH. Residues 95–116 form a helical membrane-spanning segment; sequence LSSGLACGLAGLSAGMAIGIVG. The Cytoplasmic segment spans residues 117–128; the sequence is DAGVRANAQQPK. The helical transmembrane segment at 129–154 threads the bilayer; the sequence is LFVGMILILIFAEALALYGLIVGIIL. Over 155–164 the chain is Lumenal; it reads SSRAGQSRAE.

The protein belongs to the V-ATPase proteolipid subunit family. V-ATPase is a heteromultimeric enzyme composed of a peripheral catalytic V1 complex (components A to H) attached to an integral membrane V0 proton pore complex (components: a, c, c'', d and e). The proteolipid components c and c'' are present as a hexameric ring that forms the proton-conducting pore. As to expression, expressed in leaf, root, flower and silique.

It is found in the vacuole membrane. Functionally, proton-conducting pore forming subunit of the membrane integral V0 complex of vacuolar ATPase. V-ATPase is responsible for acidifying a variety of intracellular compartments in eukaryotic cells. In Arabidopsis thaliana (Mouse-ear cress), this protein is V-type proton ATPase subunit c3 (VHA-c3).